The primary structure comprises 246 residues: UPF0246 protein str1967 (246 aa).

It belongs to the UPF0246 family.

This is UPF0246 protein str1967 from Streptococcus thermophilus (strain CNRZ 1066).